Reading from the N-terminus, the 420-residue chain is Heterogeneous nuclear ribonucleoprotein D-like (420 aa).

Disordered stretches follow at residues 1–83 and 96–120; these read MEVP…RRRP and QRSAAAAAATRTARQHPPADSSVTM. Residue Arg25 is modified to Omega-N-methylarginine. Low complexity predominate over residues 36 to 52; sequence RQLAPLLPSLAPSSARQ. 2 consecutive RRM domains span residues 148 to 230 and 233 to 312; these read GKMF…KGKE and KKVF…QPKE. Lys161 carries the post-translational modification N6-methyllysine. Residue Lys209 forms a Glycyl lysine isopeptide (Lys-Gly) (interchain with G-Cter in SUMO2) linkage. Lys216 carries the N6-acetyllysine modification. Residue Ser241 is modified to Phosphoserine. Disordered regions lie at residues 313 to 348 and 398 to 420; these read VYRQQQQQQKGGRGAAAGGRGGTRGRGRGQGQNWNQ and GQQSTYGKASRGGGNHQNNYQPY. Positions 323-342 are enriched in gly residues; sequence GGRGAAAGGRGGTRGRGRGQ. The interval 342 to 420 is necessary for interaction with TNPO1; sequence QGQNWNQGFN…GNHQNNYQPY (79 aa). Residues 396–420 form a necessary for its nuclear import and export region; it reads YSGQQSTYGKASRGGGNHQNNYQPY. Arg408 carries the post-translational modification Dimethylated arginine; alternate. Arg408 is subject to Omega-N-methylarginine; alternate.

As to quaternary structure, interacts with ZNF148. Interacts with TNPO1. Post-translationally, dimethylation of Arg-408 is probably of the asymmetric type. Expressed in heart, brain, placenta, lung, liver, skeletal muscle, kidney, pancreas, spleen, thymus, prostate, testis, ovary, small intestine, colon and leukocytes. Expressed in myeloid leukemia, gastric adenocarcinoma, cervical carcinoma, hepatoma, fibrosarcoma, colon adenocarcinoma, epidermoid carcinoma, osteosarcoma and urinary bladder carcinoma cells.

Its subcellular location is the nucleus. The protein localises to the cytoplasm. Its function is as follows. Acts as a transcriptional regulator. Promotes transcription repression. Promotes transcription activation in differentiated myotubes. Binds to double- and single-stranded DNA sequences. Binds to the transcription suppressor CATR sequence of the COX5B promoter. Binds with high affinity to RNA molecules that contain AU-rich elements (AREs) found within the 3'-UTR of many proto-oncogenes and cytokine mRNAs. Binds both to nuclear and cytoplasmic poly(A) mRNAs. Binds to poly(G) and poly(A), but not to poly(U) or poly(C) RNA homopolymers. Binds to the 5'-ACUAGC-3' RNA consensus sequence. This is Heterogeneous nuclear ribonucleoprotein D-like (HNRNPDL) from Homo sapiens (Human).